Reading from the N-terminus, the 551-residue chain is High-affinity glucose transporter (551 aa).

Residues 1–27 are Cytoplasmic-facing; it reads MSLKNWLLLRDIQYEGTFYKKFPHVYN. Residues 28 to 48 form a helical membrane-spanning segment; sequence IYVIGFIACISGLMFGFDIAS. Over 49–70 the chain is Extracellular; it reads MSSMIGTDVYKDYFSNPDSLTY. A helical transmembrane segment spans residues 71 to 91; that stretch reads GGITASMAGGSFLGSLISPNF. Residues 92–98 are Cytoplasmic-facing; sequence SDAFGRK. Residues 99 to 119 traverse the membrane as a helical segment; the sequence is VSLHICAALWIIGAILQCAAQ. The Extracellular segment spans residues 120–123; it reads DQAM. The chain crosses the membrane as a helical span at residues 124–144; it reads LIVGRVISGMGIGFGSSAAPV. Residues 145-155 lie on the Cytoplasmic side of the membrane; it reads YCSEISPPKIR. A helical transmembrane segment spans residues 156–176; the sequence is GTISGLFQFSVTVGIMVLFYI. Residues 177 to 190 lie on the Extracellular side of the membrane; sequence GYGCHFIDGAAAFR. Residues 191 to 211 traverse the membrane as a helical segment; the sequence is ITWGLQMVPGLILMVGVFFIP. At 212-289 the chain is on the cytoplasmic side; the sequence is ESPRWLANHD…VGVSAQMWQQ (78 aa). A helical transmembrane segment spans residues 290–310; sequence LCGMNVMMYYIVYIFNMAGYT. The Extracellular segment spans residues 311 to 315; the sequence is GNTNL. The helical transmembrane segment at 316 to 336 threads the bilayer; the sequence is VASSIQYVLNVVMTIPALFLI. The Cytoplasmic portion of the chain corresponds to 337–343; the sequence is DKFGRRP. Residues 344–364 form a helical membrane-spanning segment; that stretch reads VLIIGGIFMFTWLFSVAGILA. Residues 365 to 395 lie on the Extracellular side of the membrane; the sequence is TYSVPAPGGVNGDDTVTIQIPSENTSAANGV. Asn388 is a glycosylation site (N-linked (GlcNAc...) asparagine). A helical membrane pass occupies residues 396 to 416; it reads IASSYLFVCFFAPTWGIGIWI. Over 417–432 the chain is Cytoplasmic; that stretch reads YCSEIFNNMERAKGSA. Residues 433 to 453 traverse the membrane as a helical segment; it reads LSAATNWAFNFALAMFVPSAF. Residues 454 to 459 are Extracellular-facing; sequence KNISWK. A helical transmembrane segment spans residues 460–480; that stretch reads TYIIFGVFSVALTIQTFFMFP. Residues 481-551 are Cytoplasmic-facing; it reads ETKGKTLEEI…DRSDSASNSN (71 aa).

The protein belongs to the major facilitator superfamily. Sugar transporter (TC 2.A.1.1) family.

Its subcellular location is the membrane. Functionally, high-affinity glucose transporter. This chain is High-affinity glucose transporter (HGT1), found in Kluyveromyces lactis (strain ATCC 8585 / CBS 2359 / DSM 70799 / NBRC 1267 / NRRL Y-1140 / WM37) (Yeast).